Consider the following 414-residue polypeptide: Alanine--glyoxylate aminotransferase (414 aa).

A mitochondrion-targeting transit peptide spans Met1–Met23. Lys231 carries the N6-(pyridoxal phosphate)lysine modification. N6-acetyllysine is present on residues Lys256 and Lys334. Arg382 lines the substrate pocket.

The protein belongs to the class-V pyridoxal-phosphate-dependent aminotransferase family. As to quaternary structure, homodimer. The cofactor is pyridoxal 5'-phosphate.

It localises to the peroxisome. It is found in the mitochondrion matrix. It catalyses the reaction L-serine + pyruvate = 3-hydroxypyruvate + L-alanine. The enzyme catalyses glyoxylate + L-alanine = glycine + pyruvate. In terms of biological role, catalyzes the transamination of glyoxylate to glycine and contributes to the glyoxylate detoxification. Catalyzes the transamination between L-serine and pyruvate and weakly contributes to gluconeogenesis from the L-serine metabolism. The protein is Alanine--glyoxylate aminotransferase of Callithrix jacchus (White-tufted-ear marmoset).